A 412-amino-acid chain; its full sequence is MSTINKNILESLKGELKRQQDHIELIASENYVSDAVLQLSGSILTNKYAEGYPDKRYYGGCEFVDQIEKQGIELAKKIFNAGHANLQPHSGSQANEAVYRALLQNGDKVVSMSLDAGGHLTHGYPINFSGNNYDFKFYGVNRETEEIDFDEVRKVVLEHQPKLIVAGASAYSRIIDFKKFREIADEVGALLMVDMAHIAGLVAGGAHPNPMEYADVVTTTTHKTLRGARGGMILSKAEIGKKIDSSVFPGTQGGPLENQIAGKVQALYEADTPEFKEYVHQVVANSKAFAKALADNGMRLIANGTDNHLINLDVKNTLNVTGKDAEKILESIGIVSNKNMIPFDTEKPFVTSGIRVGTAAMTTRGFKEEQFVEVAKIIASALKDQSETNLNTLSKEVAKLCKQFPIYEHLSY.

Residues Leu-114 and 118 to 120 (GHL) each bind (6S)-5,6,7,8-tetrahydrofolate. Lys-223 carries the post-translational modification N6-(pyridoxal phosphate)lysine.

Belongs to the SHMT family. Homodimer. It depends on pyridoxal 5'-phosphate as a cofactor.

It is found in the cytoplasm. It carries out the reaction (6R)-5,10-methylene-5,6,7,8-tetrahydrofolate + glycine + H2O = (6S)-5,6,7,8-tetrahydrofolate + L-serine. It functions in the pathway one-carbon metabolism; tetrahydrofolate interconversion. It participates in amino-acid biosynthesis; glycine biosynthesis; glycine from L-serine: step 1/1. Functionally, catalyzes the reversible interconversion of serine and glycine with tetrahydrofolate (THF) serving as the one-carbon carrier. This reaction serves as the major source of one-carbon groups required for the biosynthesis of purines, thymidylate, methionine, and other important biomolecules. Also exhibits THF-independent aldolase activity toward beta-hydroxyamino acids, producing glycine and aldehydes, via a retro-aldol mechanism. The protein is Serine hydroxymethyltransferase of Mesoplasma florum (strain ATCC 33453 / NBRC 100688 / NCTC 11704 / L1) (Acholeplasma florum).